Here is a 510-residue protein sequence, read N- to C-terminus: GPI mannosyltransferase 3 (510 aa).

Helical transmembrane passes span 17-37 (TVLV…KTFF), 96-116 (IAPK…TWKL), 123-143 (PAEA…WFFL), 145-163 (RTFS…LNYW), 179-199 (LFIG…WAVL), 221-241 (VALV…EPVF), and 269-289 (YEAL…GLWI). N290 carries an N-linked (GlcNAc...) asparagine glycan. Helical transmembrane passes span 316–336 (FIYP…TQTP) and 342–362 (WLVW…SQVH).

It belongs to the glycosyltransferase 22 family. PIGB subfamily.

The protein localises to the endoplasmic reticulum membrane. It functions in the pathway glycolipid biosynthesis; glycosylphosphatidylinositol-anchor biosynthesis. Functionally, mannosyltransferase involved in glycosylphosphatidylinositol-anchor biosynthesis. Transfers the third mannose to Man2-GlcN-acyl-PI during GPI precursor assembly. The polypeptide is GPI mannosyltransferase 3 (GPI10) (Yarrowia lipolytica (strain CLIB 122 / E 150) (Yeast)).